We begin with the raw amino-acid sequence, 372 residues long: Mitogen-activated protein kinase homolog NTF3 (372 aa).

Residues 32–319 (YVPIKPIGRG…VIEALQHPYM (288 aa)) form the Protein kinase domain. ATP contacts are provided by residues 38–46 (IGRGAYGIV) and Lys-61. The Proton acceptor role is filled by Asp-158. At Thr-191 the chain carries Phosphothreonine. The TXY signature appears at 191 to 193 (TEY). Phosphotyrosine is present on Tyr-193.

This sequence belongs to the protein kinase superfamily. CMGC Ser/Thr protein kinase family. MAP kinase subfamily. Mg(2+) is required as a cofactor. Dually phosphorylated on Thr-191 and Tyr-193, which activates the enzyme. Very low autophosphorylation, although dramatically increased when Mn(2+) is added to the reaction instead of Mg(2+). Ubiquitous.

The enzyme catalyses L-seryl-[protein] + ATP = O-phospho-L-seryl-[protein] + ADP + H(+). It carries out the reaction L-threonyl-[protein] + ATP = O-phospho-L-threonyl-[protein] + ADP + H(+). Its activity is regulated as follows. Activated by tyrosine and threonine phosphorylation. The polypeptide is Mitogen-activated protein kinase homolog NTF3 (NTF3) (Nicotiana tabacum (Common tobacco)).